The primary structure comprises 129 residues: NHP2-like protein 1 homolog (129 aa).

Belongs to the eukaryotic ribosomal protein eL8 family.

It localises to the nucleus. Its subcellular location is the nucleolus. In terms of biological role, binds to the 5'-stem-loop of U4 snRNA and may play a role in the late stage of spliceosome assembly. The protein undergoes a conformational change upon RNA-binding. This is NHP2-like protein 1 homolog from Dictyostelium discoideum (Social amoeba).